A 341-amino-acid chain; its full sequence is Glyceraldehyde-3-phosphate dehydrogenase, cytosolic (341 aa).

Residues 15–16 (RI), D37, and R84 each bind NAD(+). Residues 155–157 (SCT), T186, 215–216 (TG), and R238 contribute to the D-glyceraldehyde 3-phosphate site. The active-site Nucleophile is C156. N320 is an NAD(+) binding site.

This sequence belongs to the glyceraldehyde-3-phosphate dehydrogenase family. As to quaternary structure, homotetramer.

It localises to the cytoplasm. The catalysed reaction is D-glyceraldehyde 3-phosphate + phosphate + NAD(+) = (2R)-3-phospho-glyceroyl phosphate + NADH + H(+). It functions in the pathway carbohydrate degradation; glycolysis; pyruvate from D-glyceraldehyde 3-phosphate: step 1/5. Key enzyme in glycolysis that catalyzes the first step of the pathway by converting D-glyceraldehyde 3-phosphate (G3P) into 3-phospho-D-glyceroyl phosphate. Essential for the maintenance of cellular ATP levels and carbohydrate metabolism. The sequence is that of Glyceraldehyde-3-phosphate dehydrogenase, cytosolic (GAPC) from Magnolia liliiflora (Mulan magnolia).